Reading from the N-terminus, the 273-residue chain is Shikimate dehydrogenase (NADP(+)) (273 aa).

Residues 15-17 and T62 each bind shikimate; that span reads SKS. Catalysis depends on K66, which acts as the Proton acceptor. E78 contributes to the NADP(+) binding site. The shikimate site is built by N87 and D103. NADP(+) is bound by residues 127-131, 150-155, and M213; these read GAGGA and NRTQEK. A shikimate-binding site is contributed by Y215. Residue G237 coordinates NADP(+).

This sequence belongs to the shikimate dehydrogenase family. Homodimer.

The enzyme catalyses shikimate + NADP(+) = 3-dehydroshikimate + NADPH + H(+). It participates in metabolic intermediate biosynthesis; chorismate biosynthesis; chorismate from D-erythrose 4-phosphate and phosphoenolpyruvate: step 4/7. Functionally, involved in the biosynthesis of the chorismate, which leads to the biosynthesis of aromatic amino acids. Catalyzes the reversible NADPH linked reduction of 3-dehydroshikimate (DHSA) to yield shikimate (SA). This Shewanella woodyi (strain ATCC 51908 / MS32) protein is Shikimate dehydrogenase (NADP(+)).